The following is a 382-amino-acid chain: MTREGQFREELGYDRMPTLERGRQDAGRQDPGSYTPDSKPKDLQLSKRLPPCFSYKTWVFSVLMGSCLLVTSGFSLYLGNVFPSEMDYLRCAAGSCIPSAIVSFAVGRRNVSAIPNFQILFVSTFAVTTTCLIWFGCKLILNPSAININFNLILLLLLELLMAATVIISARSSEEPCKKKKGSISDGSNILDEVTFPARVLKSYSVVEVIAGVSAVLGGVIALNVEEAVSGPHLSVTFFWILVACFPSAIASHVTAECPSKCLVEVLIAISSLTSPLLFTASGYLSFSVMRVVEIFKDYPPAIKSYDVLLLLLLLLLLLQGGLNTGTAIQCVSFKVSARLQAASWDPQSCPQERPAGEVVRGPLKEFDKEKAWRAVVVQMAQ.

Basic and acidic residues predominate over residues 1-28; the sequence is MTREGQFREELGYDRMPTLERGRQDAGR. A disordered region spans residues 1 to 43; sequence MTREGQFREELGYDRMPTLERGRQDAGRQDPGSYTPDSKPKDL. A run of 4 helical transmembrane segments spans residues 58 to 78, 88 to 107, 117 to 137, and 148 to 168; these read WVFS…SLYL, YLRC…FAVG, FQIL…WFGC, and INFN…TVII. Residues Ser-183, Ser-185, and Ser-188 each carry the phosphoserine modification. Helical transmembrane passes span 205–225, 234–254, 263–283, and 309–329; these read SVVE…ALNV, LSVT…ASHV, LVEV…TASG, and LLLL…GTAI.

As to quaternary structure, interacts with ATP1B1. Part of a complex containing ATP1B1, TRPV4, AQP4 and HEPACAM.

The protein localises to the membrane. Its subcellular location is the cell membrane. The protein resides in the cytoplasm. It localises to the perinuclear region. It is found in the endoplasmic reticulum. In terms of biological role, transmembrane protein mainly expressed in brain astrocytes that may play a role in transport across the blood-brain and brain-cerebrospinal fluid barriers. Regulates the response of astrocytes to hypo-osmosis by promoting calcium influx. May function as regulatory protein of membrane protein complexes such as ion channels. This Mus musculus (Mouse) protein is Membrane protein MLC1.